The following is a 596-amino-acid chain: Transcription factor IIIB 70 kDa subunit (596 aa).

The segment at 1 to 33 (MPVCKNCHGTEFERDLSNANNDLVCKACGVVSE) adopts a TFIIB-type zinc-finger fold. Residues C4, C7, C25, and C28 each contribute to the Zn(2+) site. A run of 2 repeats spans residues 90–166 (VSYA…KMVK) and 185–264 (FAEK…EFKN). Disordered stretches follow at residues 363–421 (GENI…NESG) and 509–534 (IATG…EPTK). Residues 365–375 (NIYHEGSENET) show a composition bias toward basic and acidic residues. A phosphoserine mark is found at S381 and S384. The segment covering 388–421 (EHVEGEDKETEGTEEKVKKVKTKTSEEKKENESG) has biased composition (basic and acidic residues). A compositionally biased stretch (basic residues) spans 516–526 (VKKKRTRRRNN).

The protein belongs to the TFIIB family. In terms of assembly, TFIIIB comprises the TATA-binding protein (TBP), the B-related factor (BRF) and the B' component (TFC5).

The protein localises to the nucleus. General activator of RNA polymerase III transcription. Interacts with TBP. Binds to Pol III subunit C34 and to the TAU135 component of TFIIIC. The sequence is that of Transcription factor IIIB 70 kDa subunit (BRF1) from Saccharomyces cerevisiae (strain ATCC 204508 / S288c) (Baker's yeast).